The following is a 458-amino-acid chain: ATP synthase subunit beta (458 aa).

148-155 lines the ATP pocket; it reads GGAGVGKT.

The protein belongs to the ATPase alpha/beta chains family. As to quaternary structure, F-type ATPases have 2 components, CF(1) - the catalytic core - and CF(0) - the membrane proton channel. CF(1) has five subunits: alpha(3), beta(3), gamma(1), delta(1), epsilon(1). CF(0) has three main subunits: a(1), b(2) and c(9-12). The alpha and beta chains form an alternating ring which encloses part of the gamma chain. CF(1) is attached to CF(0) by a central stalk formed by the gamma and epsilon chains, while a peripheral stalk is formed by the delta and b chains.

Its subcellular location is the cell inner membrane. The enzyme catalyses ATP + H2O + 4 H(+)(in) = ADP + phosphate + 5 H(+)(out). Produces ATP from ADP in the presence of a proton gradient across the membrane. The catalytic sites are hosted primarily by the beta subunits. This chain is ATP synthase subunit beta, found in Pseudomonas fluorescens (strain SBW25).